Reading from the N-terminus, the 602-residue chain is UvrABC system protein C (602 aa).

One can recognise a GIY-YIG domain in the interval Thr17–Ile94. One can recognise a UVR domain in the interval Ser199–Ile234.

This sequence belongs to the UvrC family. As to quaternary structure, interacts with UvrB in an incision complex.

It is found in the cytoplasm. The UvrABC repair system catalyzes the recognition and processing of DNA lesions. UvrC both incises the 5' and 3' sides of the lesion. The N-terminal half is responsible for the 3' incision and the C-terminal half is responsible for the 5' incision. This is UvrABC system protein C from Borrelia turicatae (strain 91E135).